Reading from the N-terminus, the 417-residue chain is Inner membrane transport protein YnfM (417 aa).

The segment at 1-22 (MSRTTTVDGAPASDTDKQSISQ) is disordered. At 1 to 38 (MSRTTTVDGAPASDTDKQSISQPNQFIKRGTPQFMRVT) the chain is on the periplasmic side. A helical membrane pass occupies residues 39–59 (LALFSAGLATFALLYCVQPIL). Topologically, residues 60–73 (PVLSQEFGLTPANS) are cytoplasmic. The helical transmembrane segment at 74–94 (SISLSISTAMLAIGLLFTGPL) threads the bilayer. Over 95–101 (SDAIGRK) the chain is Periplasmic. A helical membrane pass occupies residues 102–122 (PVMVTALLLASICTLLSTMMT). Residues 123–125 (SWH) lie on the Cytoplasmic side of the membrane. A helical membrane pass occupies residues 126-146 (GILIMRALIGLSLSGVAAVGM). Topologically, residues 147–152 (TYLSEE) are periplasmic. Residues 153–173 (IHPSFVAFSMGLYISGNSIGG) traverse the membrane as a helical segment. Residues 174–190 (MSGRLISGVFTDFFNWR) lie on the Cytoplasmic side of the membrane. A helical membrane pass occupies residues 191 to 211 (IALAAIGCFALASALMFWKIL). The Periplasmic portion of the chain corresponds to 212–241 (PESRHFRPTSLRPKTLFINFRLHWRDRGLP). Residues 242–262 (LLFAEGFLLMGSFVTLFNYIG) traverse the membrane as a helical segment. Topologically, residues 263-264 (YR) are cytoplasmic. The helical transmembrane segment at 265–285 (LMLSPWHVSQAVVGLLSLAYL) threads the bilayer. The Periplasmic segment spans residues 286–315 (TGTWSSPKAGTMTTRYGRGPVMLFSTGVML). Residues 316-336 (FGLLMTLFSSLWLIFAGMLLF) form a helical membrane-spanning segment. At 337–364 (SAGFFAAHSVASSWIGPRAKRAKGQASS) the chain is on the cytoplasmic side. A helical transmembrane segment spans residues 365-385 (LYLFSYYLGSSIAGTLGGVFW). Over 386 to 387 (HN) the chain is Periplasmic. A helical transmembrane segment spans residues 388-408 (YGWNGVGAFIALMLVIALLVG). The Cytoplasmic segment spans residues 409–417 (TRLHRRLHA).

Belongs to the major facilitator superfamily.

It is found in the cell inner membrane. This is Inner membrane transport protein YnfM (ynfM) from Escherichia coli (strain K12).